The primary structure comprises 242 residues: Lactate utilization protein A 2 (242 aa).

The protein belongs to the LutA/YkgE family.

Its function is as follows. Is involved in L-lactate degradation and allows cells to grow with lactate as the sole carbon source. This Bacillus cereus (strain AH820) protein is Lactate utilization protein A 2.